We begin with the raw amino-acid sequence, 198 residues long: Endonuclease V (198 aa).

Residues Asp-38 and Asp-101 each coordinate Mg(2+).

It belongs to the endonuclease V family. The cofactor is Mg(2+).

It is found in the cytoplasm. The catalysed reaction is Endonucleolytic cleavage at apurinic or apyrimidinic sites to products with a 5'-phosphate.. DNA repair enzyme involved in the repair of deaminated bases. Selectively cleaves double-stranded DNA at the second phosphodiester bond 3' to a deoxyinosine leaving behind the intact lesion on the nicked DNA. The protein is Endonuclease V of Saccharolobus islandicus (strain Y.N.15.51 / Yellowstone #2) (Sulfolobus islandicus).